We begin with the raw amino-acid sequence, 400 residues long: MSESDLWLLPDGVEELLPPEATRIEELRRQLLDLYHSWGYEMIVPPLLEFLDSLLIGVGRDLELEMFKVTDQLTGRLMGIRADMTPQVARIDSRRSHDVASRFCYIGSVLRTKSPSMFSSRTPIQTGCELYGVVGSAADIEIISLMLETLNLAKISPLHMDIAHVGVYQAILAEAKLSKIQSEELFEALRRKAIPEVDEIAATIPDKAIRQKVMALPRLAGGKEKMKEARKIFAGNPDIEYALDEMSQVAAVIGERYPEVEIYFDFCEMRGYKYYTGLVFAAYTEGLGQAVAKGGRYDEVGRDFGRGRPAMGFSVDLKALYRMGKREWAQPAGAILAPNGQDAELWELIRQLRRSNRVIQLMPGEEAGHWASHCDRQIVRDESGQWIVKPLTEFNPNHVK.

The protein belongs to the class-II aminoacyl-tRNA synthetase family. HisZ subfamily. As to quaternary structure, heteromultimer composed of HisG and HisZ subunits.

It localises to the cytoplasm. The protein operates within amino-acid biosynthesis; L-histidine biosynthesis; L-histidine from 5-phospho-alpha-D-ribose 1-diphosphate: step 1/9. In terms of biological role, required for the first step of histidine biosynthesis. May allow the feedback regulation of ATP phosphoribosyltransferase activity by histidine. The sequence is that of ATP phosphoribosyltransferase regulatory subunit from Hahella chejuensis (strain KCTC 2396).